Here is a 347-residue protein sequence, read N- to C-terminus: Gamma-glutamyl hydrolase B (347 aa).

The first 22 residues, 1–22 (MIKLFSLFIYLYLISNLKLINT), serve as a signal peptide directing secretion. The 292-residue stretch at 23–314 (INNTPVIGIL…THVEQIYIFN (292 aa)) folds into the Gamma-glutamyl hydrolase domain. Cysteine 128 functions as the Nucleophile in the catalytic mechanism. N-linked (GlcNAc...) asparagine glycans are attached at residues asparagine 152, asparagine 158, and asparagine 201. The Proton donor role is filled by histidine 240. N-linked (GlcNAc...) asparagine glycans are attached at residues asparagine 273, asparagine 314, and asparagine 318.

This sequence belongs to the peptidase C26 family.

The protein resides in the secreted. Its subcellular location is the extracellular space. The catalysed reaction is (6S)-5,6,7,8-tetrahydrofolyl-(gamma-L-Glu)(n) + (n-1) H2O = (6S)-5,6,7,8-tetrahydrofolate + (n-1) L-glutamate. This chain is Gamma-glutamyl hydrolase B (gghB), found in Dictyostelium discoideum (Social amoeba).